The following is a 199-amino-acid chain: uncharacterized protein (199 aa).

This is an uncharacterized protein from Connochaetes taurinus (Blue wildebeest).